The sequence spans 281 residues: 40S small subunit processome assembly factor 1 (281 aa).

The disordered stretch occupies residues 29–141 (LGETEGETEQ…DEDEPAKNKT (113 aa)). Phosphoserine is present on residues serine 67 and serine 75. At lysine 172 the chain carries N6-acetyllysine. The segment at 221-254 (ETDIFKKKKKKGRGQEDRRSKKSAPSILSSGQVG) is disordered. Residue serine 267 is modified to Phosphoserine.

In terms of assembly, part of the small subunit (SSU) processome, composed of more than 70 proteins and the RNA chaperone small nucleolar RNA (snoRNA) U3.

It localises to the chromosome. Its subcellular location is the nucleus. It is found in the nucleolus. In terms of biological role, part of the small subunit (SSU) processome, first precursor of the small eukaryotic ribosomal subunit. During the assembly of the SSU processome in the nucleolus, many ribosome biogenesis factors, an RNA chaperone and ribosomal proteins associate with the nascent pre-rRNA and work in concert to generate RNA folding, modifications, rearrangements and cleavage as well as targeted degradation of pre-ribosomal RNA by the RNA exosome. Prevents helicase DHX37 to be recruited before post-A1 state. The protein is 40S small subunit processome assembly factor 1 of Mus musculus (Mouse).